Reading from the N-terminus, the 622-residue chain is Probable potassium transport system protein Kup (622 aa).

12 helical membrane-spanning segments follow: residues 9–29 (LPAV…TSPL), 52–72 (FLSL…LAFV), 101–121 (VLLV…VITP), 137–157 (PALT…LFVI), 169–189 (FGPV…ISIF), 213–233 (VAFF…ALYA), 247–267 (WFTV…ALIL), 287–309 (FPMV…SGVF), 337–357 (IYIP…VVTF), 363–383 (LAAA…ILAC), 396–416 (VVKI…LANV), and 419–439 (FFAG…VMAT).

It belongs to the HAK/KUP transporter (TC 2.A.72) family.

The protein resides in the cell inner membrane. The enzyme catalyses K(+)(in) + H(+)(in) = K(+)(out) + H(+)(out). Functionally, transport of potassium into the cell. Likely operates as a K(+):H(+) symporter. The polypeptide is Probable potassium transport system protein Kup (Tolumonas auensis (strain DSM 9187 / NBRC 110442 / TA 4)).